The following is a 470-amino-acid chain: 3-isopropylmalate dehydratase large subunit (470 aa).

The [4Fe-4S] cluster site is built by Cys-349, Cys-409, and Cys-412.

Belongs to the aconitase/IPM isomerase family. LeuC type 1 subfamily. In terms of assembly, heterodimer of LeuC and LeuD. Requires [4Fe-4S] cluster as cofactor.

The catalysed reaction is (2R,3S)-3-isopropylmalate = (2S)-2-isopropylmalate. The protein operates within amino-acid biosynthesis; L-leucine biosynthesis; L-leucine from 3-methyl-2-oxobutanoate: step 2/4. Functionally, catalyzes the isomerization between 2-isopropylmalate and 3-isopropylmalate, via the formation of 2-isopropylmaleate. The protein is 3-isopropylmalate dehydratase large subunit of Afipia carboxidovorans (strain ATCC 49405 / DSM 1227 / KCTC 32145 / OM5) (Oligotropha carboxidovorans).